The following is a 708-amino-acid chain: MERLIDNSHGWPGRMVWLLAACLGSAAAFAQTGPAAQAAAAVQRVDGDFIRANAARTPDWPTIGVDYAETRYSRLDQINAANVKDLGLAWSYNLESTRGVEATPVVVDGIMYVSASWSVVHAIDTRTGNRIWTYDPQIDRSTGFKGCCDVVNRGVALWKGKVYVGAWDGRLIALDAATGKEVWHQNTFEGQKGSLTITGAPRVFKGKVIIGKRGAEYGVRGYITAYDAETGERKWRWFSVPGDPSKPFEDESMKRAARTWDPSGKWWEAGGGGTMWDSMTFDAELNTMYVGTGNGSPWSHKVRSPKGGDNLYLASIVALDPDTGKYKWHYQETPGDNWDYTSTQPMILADIKIAGKPRKVILHAPKNGFFFVLDRTNGKFISAKNFVPVNWASGYDKHGKPIGIAAARDGSKPQDAVPGPYGAHNWHPMSFNPQTGLVYLPAQNVPVNLMDDKKWEFNQAGPGKPQSGTGWNTAKFFNAEPPKSKPFGRLLAWDPVAQKAAWSVEHVSPWNGGTLTTAGNVVFQGTADGRLVAYHAATGEKLWEAPTGTGVVAAPSTYMVDGRQYVSVAVGWGGVYGLAARATERQGPGTVYTFVVAGKARMPEFVAQRTGQLLQGVKYDPAKVEAGTMLYVANCVFCHGVPGVDRGGNIPNLGYMDASYIENLPNFVFKGPAMVRGMPDFTGKLSGDDVESLKAFIQGTADAIRPKP.

The N-terminal stretch at 1–31 (MERLIDNSHGWPGRMVWLLAACLGSAAAFAQ) is a signal peptide. E101 contributes to the pyrroloquinoline quinone binding site. C147 and C148 form a disulfide bridge. Pyrroloquinoline quinone-binding positions include R153, T198, and 214–215 (GA). Ca(2+) is bound at residue E216. T274 serves as a coordination point for pyrroloquinoline quinone. 2 residues coordinate Ca(2+): N294 and D339. The active-site Proton acceptor is the D339. Pyrroloquinoline quinone contacts are provided by residues K366, 425–426 (NW), and V575. The region spanning 619 to 708 (YDPAKVEAGT…GTADAIRPKP (90 aa)) is the Cytochrome c domain. Residues C635, C638, H639, and M678 each coordinate heme c.

Belongs to the bacterial PQQ dehydrogenase family. In terms of assembly, monomer. Requires pyrroloquinoline quinone as cofactor. The cofactor is Ca(2+). Heme c serves as cofactor. In terms of processing, in the crystallographic structures Trp-543 is oxidized to 2'-hydroxytryptophan.

The protein resides in the periplasm. The enzyme catalyses 2 oxidized [azurin] + a primary alcohol = 2 reduced [azurin] + an aldehyde + 2 H(+). Functionally, catalyzes the dye-linked oxidation of primary alcohols to the corresponding aldehydes and the (subsequent) oxidation of the aldehydes to carboxylic acids. Methanol is not a substrate. The polypeptide is Quinohemoprotein alcohol dehydrogenase (Comamonas testosteroni (Pseudomonas testosteroni)).